Consider the following 470-residue polypeptide: Argininosuccinate lyase (470 aa).

The protein belongs to the lyase 1 family. Argininosuccinate lyase subfamily.

It is found in the cytoplasm. The enzyme catalyses 2-(N(omega)-L-arginino)succinate = fumarate + L-arginine. It functions in the pathway amino-acid biosynthesis; L-arginine biosynthesis; L-arginine from L-ornithine and carbamoyl phosphate: step 3/3. The sequence is that of Argininosuccinate lyase from Bordetella avium (strain 197N).